The chain runs to 177 residues: NADH-quinone oxidoreductase subunit E (177 aa).

Positions 93, 98, 134, and 138 each coordinate [2Fe-2S] cluster.

This sequence belongs to the complex I 24 kDa subunit family. Requires [2Fe-2S] cluster as cofactor.

The enzyme catalyses a quinone + NADH + 5 H(+)(in) = a quinol + NAD(+) + 4 H(+)(out). Functionally, NDH-1 shuttles electrons from NADH, via FMN and iron-sulfur (Fe-S) centers, to quinones in the respiratory chain. Couples the redox reaction to proton translocation (for every two electrons transferred, four hydrogen ions are translocated across the cytoplasmic membrane), and thus conserves the redox energy in a proton gradient. The chain is NADH-quinone oxidoreductase subunit E (nuoE) from Rickettsia prowazekii (strain Madrid E).